A 20-amino-acid polypeptide reads, in one-letter code: MGQFFAYATVITVKENDHVA.

This is an uncharacterized protein from Escherichia coli (strain K12).